A 697-amino-acid chain; its full sequence is Glycine--tRNA ligase beta subunit (697 aa).

This sequence belongs to the class-II aminoacyl-tRNA synthetase family. In terms of assembly, tetramer of two alpha and two beta subunits.

It localises to the cytoplasm. The enzyme catalyses tRNA(Gly) + glycine + ATP = glycyl-tRNA(Gly) + AMP + diphosphate. The polypeptide is Glycine--tRNA ligase beta subunit (Ralstonia nicotianae (strain ATCC BAA-1114 / GMI1000) (Ralstonia solanacearum)).